The sequence spans 157 residues: Peptide methionine sulfoxide reductase MsrA (157 aa).

Cys-10 is a catalytic residue.

The protein belongs to the MsrA Met sulfoxide reductase family.

The enzyme catalyses L-methionyl-[protein] + [thioredoxin]-disulfide + H2O = L-methionyl-(S)-S-oxide-[protein] + [thioredoxin]-dithiol. The catalysed reaction is [thioredoxin]-disulfide + L-methionine + H2O = L-methionine (S)-S-oxide + [thioredoxin]-dithiol. Has an important function as a repair enzyme for proteins that have been inactivated by oxidation. Catalyzes the reversible oxidation-reduction of methionine sulfoxide in proteins to methionine. This is Peptide methionine sulfoxide reductase MsrA from Clostridium perfringens (strain 13 / Type A).